Consider the following 294-residue polypeptide: Lipoyl synthase (294 aa).

7 residues coordinate [4Fe-4S] cluster: C35, C40, C46, C61, C65, C68, and S273. One can recognise a Radical SAM core domain in the interval 47–262 (FRQRQATFLI…REQALSMGFE (216 aa)).

Belongs to the radical SAM superfamily. Lipoyl synthase family. Requires [4Fe-4S] cluster as cofactor.

Its subcellular location is the cytoplasm. The enzyme catalyses [[Fe-S] cluster scaffold protein carrying a second [4Fe-4S](2+) cluster] + N(6)-octanoyl-L-lysyl-[protein] + 2 oxidized [2Fe-2S]-[ferredoxin] + 2 S-adenosyl-L-methionine + 4 H(+) = [[Fe-S] cluster scaffold protein] + N(6)-[(R)-dihydrolipoyl]-L-lysyl-[protein] + 4 Fe(3+) + 2 hydrogen sulfide + 2 5'-deoxyadenosine + 2 L-methionine + 2 reduced [2Fe-2S]-[ferredoxin]. It participates in protein modification; protein lipoylation via endogenous pathway; protein N(6)-(lipoyl)lysine from octanoyl-[acyl-carrier-protein]: step 2/2. Its function is as follows. Catalyzes the radical-mediated insertion of two sulfur atoms into the C-6 and C-8 positions of the octanoyl moiety bound to the lipoyl domains of lipoate-dependent enzymes, thereby converting the octanoylated domains into lipoylated derivatives. In Geotalea daltonii (strain DSM 22248 / JCM 15807 / FRC-32) (Geobacter daltonii), this protein is Lipoyl synthase.